Here is a 178-residue protein sequence, read N- to C-terminus: Large ribosomal subunit protein uL16 (178 aa).

The protein belongs to the universal ribosomal protein uL16 family.

The sequence is that of Large ribosomal subunit protein uL16 from Saccharolobus islandicus (strain Y.N.15.51 / Yellowstone #2) (Sulfolobus islandicus).